Reading from the N-terminus, the 448-residue chain is Protein odr-4 homolog (448 aa).

2 consecutive transmembrane segments (helical) span residues A76–T96 and G428–I448.

The protein belongs to the ODR-4 family.

The protein localises to the membrane. May play a role in the trafficking of a subset of G-protein coupled receptors. This chain is Protein odr-4 homolog (odr4), found in Xenopus tropicalis (Western clawed frog).